An 892-amino-acid chain; its full sequence is Alanine--tRNA ligase (892 aa).

Zn(2+) contacts are provided by histidine 594, histidine 598, cysteine 702, and histidine 706.

The protein belongs to the class-II aminoacyl-tRNA synthetase family. Requires Zn(2+) as cofactor.

Its subcellular location is the cytoplasm. It catalyses the reaction tRNA(Ala) + L-alanine + ATP = L-alanyl-tRNA(Ala) + AMP + diphosphate. Functionally, catalyzes the attachment of alanine to tRNA(Ala) in a two-step reaction: alanine is first activated by ATP to form Ala-AMP and then transferred to the acceptor end of tRNA(Ala). Also edits incorrectly charged Ser-tRNA(Ala) and Gly-tRNA(Ala) via its editing domain. The sequence is that of Alanine--tRNA ligase from Pyrobaculum arsenaticum (strain DSM 13514 / JCM 11321 / PZ6).